The following is a 344-amino-acid chain: Cyclin-dependent kinase 20 (344 aa).

Residues 4–288 (YSILGRIGEG…ARQALLHPYF (285 aa)) form the Protein kinase domain. ATP is bound by residues 10-18 (IGEGAHGIV) and Lys-33. Residue Asp-127 is the Proton acceptor of the active site.

Belongs to the protein kinase superfamily. CMGC Ser/Thr protein kinase family. CDC2/CDKX subfamily. As to quaternary structure, monomer. Interacts with tbc1d32.

Its subcellular location is the nucleus. It is found in the cytoplasm. It localises to the cell projection. The protein localises to the cilium. It carries out the reaction L-seryl-[protein] + ATP = O-phospho-L-seryl-[protein] + ADP + H(+). It catalyses the reaction L-threonyl-[protein] + ATP = O-phospho-L-threonyl-[protein] + ADP + H(+). Functionally, involved in cell growth. Activates cdk2, a kinase involved in the control of the cell cycle, by phosphorylating residue 'Thr-160'. Required for high-level Shh responses in the developing neural tube. Together with tbc1d32, controls the structure of the primary cilium by coordinating assembly of the ciliary membrane and axoneme, allowing gli2 to be properly activated in response to SHH signaling. In Danio rerio (Zebrafish), this protein is Cyclin-dependent kinase 20 (cdk20).